Consider the following 200-residue polypeptide: Putative HTH-type transcriptional regulator YhjB (200 aa).

The HTH luxR-type domain maps to 135–200 (DIKDLKSLSA…QAAMMLNISS (66 aa)). Positions 159-178 (NKEIGRALNISTGTVKAHLE) form a DNA-binding region, H-T-H motif.

This Escherichia coli (strain K12) protein is Putative HTH-type transcriptional regulator YhjB (yhjB).